A 185-amino-acid chain; its full sequence is Ubiquitin-fold modifier-conjugating enzyme 1 (185 aa).

Cysteine 119 acts as the Glycyl thioester intermediate in catalysis.

The protein belongs to the ubiquitin-conjugating enzyme family. UFC1 subfamily.

Its function is as follows. E2-like enzyme which forms an intermediate with UFM1 via a thioester linkage. In Oryza sativa subsp. japonica (Rice), this protein is Ubiquitin-fold modifier-conjugating enzyme 1.